The primary structure comprises 769 residues: MKFSYNWIREFVPGLTQAAAPLERLITMKTAECEGIEEEGKLLTIARVARVETVEPIPDSHNVKAVVDAGPLGRKTVVCGAPNCRPGILTAYAPIGRKVVSGVESDGMLASGAELGINKDHDGIVELNAPLGEPIPGCEPDAAIEIDNKSITHRPDLWGHHGMAREVAAILGLPLTDHAKLDLLPEGVPAIRVQIEDLALCPRYSALVFENVTVQPSPLWLQYRLTAIGLNPINNIVDMTNFVMAELAQPMHAFDADLLKGDTIFVRPAKAGEYFVALNDEEYTLDPSNLVIADASGAIALAGVIGGKGSAIGDTTTRVVLESANFQASSVRKTSSAIKLRTDASMRFEKAQDPSNTVRGLARAIELLREISPGIRLVGGVADQRREIPAPPPIELPLAWLQRKLGRAIEASEVRRILESLAFGVSEPTPGVFSVTVPSWRATKDISIKDDLVEEVGRMIGYDSIAPQAPLVPASVPPGNPSRRFQHDVRNLFVDNGFTEVYNYSFLSEASVRAFGFDSASMIRVTNPIASDQELMRSSLLPGIWRNVTENAKHHESFRLFEIGLEIHRRDTGLPNEIPHLIAAYYDRQGDGQPGLFELKRLARCLMPNAQTVPAAAREFEHTARAAEIQVAGQTVGRLFELHPKLVETGRAAILDLDLRLVQSLTAGETRYTPIRRYPSSAFDLSVLAGLREQAGTLQAAIASFAGPLQESIQFVRQYVGPPLADGVKSVSFRLTVGSPERTLSSEEITAVRNAIIEGMRAKGYELRV.

Positions 40 to 141 constitute a tRNA-binding domain; the sequence is GKLLTIARVA…GEPIPGCEPD (102 aa). The region spanning 389-467 is the B5 domain; it reads PAPPPIELPL…RMIGYDSIAP (79 aa). Positions 445, 451, 454, and 455 each coordinate Mg(2+). One can recognise an FDX-ACB domain in the interval 676-768; sequence RRYPSSAFDL…GMRAKGYELR (93 aa).

This sequence belongs to the phenylalanyl-tRNA synthetase beta subunit family. Type 1 subfamily. Tetramer of two alpha and two beta subunits. It depends on Mg(2+) as a cofactor.

It is found in the cytoplasm. The enzyme catalyses tRNA(Phe) + L-phenylalanine + ATP = L-phenylalanyl-tRNA(Phe) + AMP + diphosphate + H(+). This is Phenylalanine--tRNA ligase beta subunit from Solibacter usitatus (strain Ellin6076).